A 22-amino-acid chain; its full sequence is Conantokin-Oc (22 aa).

The disordered stretch occupies residues 1–22; sequence GEEERKAMAELEAKKAQEALKA. Glutamate 3, glutamate 4, glutamate 10, and glutamate 18 each carry 4-carboxyglutamate.

In terms of tissue distribution, expressed by the venom duct.

The protein resides in the secreted. Conantokins inhibit N-methyl-D-aspartate (NMDA) receptors. This is Conantokin-Oc from Conus ochroleucus (Perfect cone).